The primary structure comprises 91 residues: Small ribosomal subunit protein uS15 (91 aa).

The protein belongs to the universal ribosomal protein uS15 family. As to quaternary structure, part of the 30S ribosomal subunit. Forms a bridge to the 50S subunit in the 70S ribosome, contacting the 23S rRNA.

Functionally, one of the primary rRNA binding proteins, it binds directly to 16S rRNA where it helps nucleate assembly of the platform of the 30S subunit by binding and bridging several RNA helices of the 16S rRNA. In terms of biological role, forms an intersubunit bridge (bridge B4) with the 23S rRNA of the 50S subunit in the ribosome. The chain is Small ribosomal subunit protein uS15 from Synechococcus sp. (strain JA-3-3Ab) (Cyanobacteria bacterium Yellowstone A-Prime).